Reading from the N-terminus, the 842-residue chain is Leucine--tRNA ligase (842 aa).

A 'HIGH' region motif is present at residues 44-55; the sequence is PYPSANGLHVGH. The 'KMSKS' region motif lies at 619–623; it reads KMSKS. Lysine 622 contributes to the ATP binding site.

The protein belongs to the class-I aminoacyl-tRNA synthetase family.

It localises to the cytoplasm. It carries out the reaction tRNA(Leu) + L-leucine + ATP = L-leucyl-tRNA(Leu) + AMP + diphosphate. The sequence is that of Leucine--tRNA ligase from Borrelia hermsii (strain HS1 / DAH).